Consider the following 479-residue polypeptide: Glucan 1,3-beta-glucosidase 2 (479 aa).

The N-terminal stretch at 1-21 (MMLFLIHLMALCCMFVAEVAC) is a signal peptide. N25, N29, N63, N104, N187, and N193 each carry an N-linked (GlcNAc...) asparagine glycan. E227 (proton donor) is an active-site residue. Residues N254, N285, and N288 are each glycosylated (N-linked (GlcNAc...) asparagine). The Nucleophile role is filled by H306. 2 N-linked (GlcNAc...) asparagine glycosylation sites follow: N318 and N451. S456 carries the GPI-anchor amidated serine lipid modification. The propeptide at 457–479 (SASAIASNKMTLLLAFLLVILVI) is removed in mature form.

It belongs to the glycosyl hydrolase 5 (cellulase A) family. In terms of processing, predicted to be a substrate for cleavage by KEX2.

The protein resides in the cell membrane. It is found in the secreted. It catalyses the reaction Successive hydrolysis of beta-D-glucose units from the non-reducing ends of (1-&gt;3)-beta-D-glucans, releasing alpha-glucose.. Its function is as follows. Beta-glucanases participate in the metabolism of beta-glucan, the main structural component of the cell wall. EXG2 is not heavily involved in the exoglucanase function of the adhesion process. In Candida albicans (strain SC5314 / ATCC MYA-2876) (Yeast), this protein is Glucan 1,3-beta-glucosidase 2 (EXG2).